A 302-amino-acid polypeptide reads, in one-letter code: 33 kDa chaperonin (302 aa).

2 disulfides stabilise this stretch: C234/C236 and C267/C270.

It belongs to the HSP33 family. Post-translationally, under oxidizing conditions two disulfide bonds are formed involving the reactive cysteines. Under reducing conditions zinc is bound to the reactive cysteines and the protein is inactive.

The protein localises to the cytoplasm. In terms of biological role, redox regulated molecular chaperone. Protects both thermally unfolding and oxidatively damaged proteins from irreversible aggregation. Plays an important role in the bacterial defense system toward oxidative stress. This is 33 kDa chaperonin from Neisseria gonorrhoeae (strain NCCP11945).